A 340-amino-acid polypeptide reads, in one-letter code: Phenylalanine--tRNA ligase alpha subunit (340 aa).

E255 lines the Mg(2+) pocket.

It belongs to the class-II aminoacyl-tRNA synthetase family. Phe-tRNA synthetase alpha subunit type 1 subfamily. In terms of assembly, tetramer of two alpha and two beta subunits. The cofactor is Mg(2+).

The protein resides in the cytoplasm. The catalysed reaction is tRNA(Phe) + L-phenylalanine + ATP = L-phenylalanyl-tRNA(Phe) + AMP + diphosphate + H(+). This chain is Phenylalanine--tRNA ligase alpha subunit, found in Desulfitobacterium hafniense (strain DSM 10664 / DCB-2).